The primary structure comprises 233 residues: Large ribosomal subunit protein uL1 (233 aa).

It belongs to the universal ribosomal protein uL1 family. In terms of assembly, part of the 50S ribosomal subunit.

Its function is as follows. Binds directly to 23S rRNA. The L1 stalk is quite mobile in the ribosome, and is involved in E site tRNA release. Protein L1 is also a translational repressor protein, it controls the translation of the L11 operon by binding to its mRNA. In Vibrio campbellii (strain ATCC BAA-1116), this protein is Large ribosomal subunit protein uL1.